Reading from the N-terminus, the 151-residue chain is Large ribosomal subunit protein uL13 (151 aa).

Belongs to the universal ribosomal protein uL13 family. In terms of assembly, part of the 50S ribosomal subunit.

This protein is one of the early assembly proteins of the 50S ribosomal subunit, although it is not seen to bind rRNA by itself. It is important during the early stages of 50S assembly. The polypeptide is Large ribosomal subunit protein uL13 (Nostoc sp. (strain PCC 7120 / SAG 25.82 / UTEX 2576)).